We begin with the raw amino-acid sequence, 205 residues long: Holliday junction branch migration complex subunit RuvA (205 aa).

A domain I region spans residues 1–64 (MIGRLRGIIL…EDAQLLFGFN (64 aa)). Residues 65-143 (DKQERALFRE…GLSGDLFNSV (79 aa)) are domain II. The flexible linker stretch occupies residues 144–156 (SDIPLTSPANVDN). Residues 157–205 (RVGEPEAEAAAALVALGYKPQEASRMISKIARPDADCETLIRDALRAAL) form a domain III region.

This sequence belongs to the RuvA family. Homotetramer. Forms an RuvA(8)-RuvB(12)-Holliday junction (HJ) complex. HJ DNA is sandwiched between 2 RuvA tetramers; dsDNA enters through RuvA and exits via RuvB. An RuvB hexamer assembles on each DNA strand where it exits the tetramer. Each RuvB hexamer is contacted by two RuvA subunits (via domain III) on 2 adjacent RuvB subunits; this complex drives branch migration. In the full resolvosome a probable DNA-RuvA(4)-RuvB(12)-RuvC(2) complex forms which resolves the HJ.

The protein resides in the cytoplasm. The RuvA-RuvB-RuvC complex processes Holliday junction (HJ) DNA during genetic recombination and DNA repair, while the RuvA-RuvB complex plays an important role in the rescue of blocked DNA replication forks via replication fork reversal (RFR). RuvA specifically binds to HJ cruciform DNA, conferring on it an open structure. The RuvB hexamer acts as an ATP-dependent pump, pulling dsDNA into and through the RuvAB complex. HJ branch migration allows RuvC to scan DNA until it finds its consensus sequence, where it cleaves and resolves the cruciform DNA. This chain is Holliday junction branch migration complex subunit RuvA, found in Pectobacterium atrosepticum (strain SCRI 1043 / ATCC BAA-672) (Erwinia carotovora subsp. atroseptica).